Here is a 101-residue protein sequence, read N- to C-terminus: Small ribosomal subunit protein uS14 (101 aa).

Residues 32–67 (SDAKRSDEEREAARLGLQKLPRNANPTRQRNRCEIT) are disordered. A compositionally biased stretch (basic and acidic residues) spans 33 to 44 (DAKRSDEEREAA).

This sequence belongs to the universal ribosomal protein uS14 family. As to quaternary structure, part of the 30S ribosomal subunit. Contacts proteins S3 and S10.

Binds 16S rRNA, required for the assembly of 30S particles and may also be responsible for determining the conformation of the 16S rRNA at the A site. The polypeptide is Small ribosomal subunit protein uS14 (Paracidovorax citrulli (strain AAC00-1) (Acidovorax citrulli)).